The chain runs to 143 residues: Transcriptional regulator MraZ (143 aa).

2 consecutive SpoVT-AbrB domains span residues 5 to 47 (TFTP…PRNV) and 76 to 119 (ADEQ…NAES).

The protein belongs to the MraZ family. Forms oligomers.

It is found in the cytoplasm. Its subcellular location is the nucleoid. This Corynebacterium kroppenstedtii (strain DSM 44385 / JCM 11950 / CIP 105744 / CCUG 35717) protein is Transcriptional regulator MraZ.